A 434-amino-acid chain; its full sequence is Chaperone SurA (434 aa).

The signal sequence occupies residues 1 to 22 (MKHSKKIVTALLALAMSQTVMA). PpiC domains are found at residues 173 to 274 (EVEF…KVMD) and 283 to 383 (VEEV…QLMD).

It localises to the periplasm. It carries out the reaction [protein]-peptidylproline (omega=180) = [protein]-peptidylproline (omega=0). In terms of biological role, chaperone involved in the correct folding and assembly of outer membrane proteins. Recognizes specific patterns of aromatic residues and the orientation of their side chains, which are found more frequently in integral outer membrane proteins. May act in both early periplasmic and late outer membrane-associated steps of protein maturation. The polypeptide is Chaperone SurA (Shewanella denitrificans (strain OS217 / ATCC BAA-1090 / DSM 15013)).